The following is a 349-amino-acid chain: Isopentenyl-diphosphate delta-isomerase (349 aa).

12–13 is a binding site for substrate; that stretch reads RK. FMN-binding positions include Ser-69, 70–72, Ser-101, and Asn-129; that span reads SMT. 101-103 serves as a coordination point for substrate; that stretch reads SQR. Gln-164 contacts substrate. Glu-165 serves as a coordination point for Mg(2+). FMN contacts are provided by residues Lys-196, Thr-226, 279 to 281, and 300 to 301; these read GIR and AA.

Belongs to the IPP isomerase type 2 family. In terms of assembly, homooctamer. Dimer of tetramers. The cofactor is FMN. Requires NADPH as cofactor. It depends on Mg(2+) as a cofactor.

The protein resides in the cytoplasm. It catalyses the reaction isopentenyl diphosphate = dimethylallyl diphosphate. Involved in the biosynthesis of isoprenoids. Catalyzes the 1,3-allylic rearrangement of the homoallylic substrate isopentenyl (IPP) to its allylic isomer, dimethylallyl diphosphate (DMAPP). In Paracoccus zeaxanthinifaciens, this protein is Isopentenyl-diphosphate delta-isomerase.